Reading from the N-terminus, the 258-residue chain is GTP cyclohydrolase FolE2 (258 aa).

It belongs to the GTP cyclohydrolase IV family.

It catalyses the reaction GTP + H2O = 7,8-dihydroneopterin 3'-triphosphate + formate + H(+). It functions in the pathway cofactor biosynthesis; 7,8-dihydroneopterin triphosphate biosynthesis; 7,8-dihydroneopterin triphosphate from GTP: step 1/1. Functionally, converts GTP to 7,8-dihydroneopterin triphosphate. This Pseudothermotoga lettingae (strain ATCC BAA-301 / DSM 14385 / NBRC 107922 / TMO) (Thermotoga lettingae) protein is GTP cyclohydrolase FolE2.